The following is a 201-amino-acid chain: Cell division protein SepF (201 aa).

The disordered stretch occupies residues 1-94; that stretch reads MALKDLFSGF…TTSKNNARNV (94 aa). Acidic residues predominate over residues 13–28; the sequence is VEEEDDELEAPPEENE. Over residues 35–44 the composition is skewed to low complexity; the sequence is PKQQAQSQNQ. Over residues 59-88 the composition is skewed to polar residues; sequence SIQSVPKKQSTRLQQSSGERKYQMNNTTSK.

This sequence belongs to the SepF family. As to quaternary structure, homodimer. Interacts with FtsZ.

It is found in the cytoplasm. Cell division protein that is part of the divisome complex and is recruited early to the Z-ring. Probably stimulates Z-ring formation, perhaps through the cross-linking of FtsZ protofilaments. Its function overlaps with FtsA. The chain is Cell division protein SepF from Staphylococcus saprophyticus subsp. saprophyticus (strain ATCC 15305 / DSM 20229 / NCIMB 8711 / NCTC 7292 / S-41).